A 941-amino-acid polypeptide reads, in one-letter code: MNKKKKPFLGMPAPLGYVPGLGRGATGFTTRSDIGPARDANDPVDDRHAPPGKRTVGDQMKKNQAADDDDEDLNDTNYDEFNGYAGSLFSSGPYEKDDEEADAIYAALDKRMDERRKERREQREKEEIEKYRMERPKIQQQFSDLKRKLAEVTEEEWLSIPEVGDARNKRQRNPRYEKLTPVPDSFFAKHLQTGENHTSVDPRQTQFGGLNTPYPGGLNTPYPGGMTPGLMTPGTGELDMRKIGQARNTLMDMRLSQVSDSVSGQTVVDPKGYLTDLNSMIPTHGGDINDIKKARLLLKSVRETNPHHPPAWIASARLEEVTGKLQVARNLIMKGTEMCPKSEDVWLEAARLQPGDTAKAVVAQAVRHLPQSVRIYIRAAELETDIRAKKRVLRKALEHVPNSVRLWKAAVELEEPEDARIMLSRAVECCPTSVELWLALARLETYENARKVLNKARENIPTDRHIWITAAKLEEANGNTQMVEKIIDRAITSLRANGVEINREQWIQDAEECDRAGSVATCQAVMRAVIGIGIEEEDRKHTWMEDADSCVAHNALECARAIYAYALQVFPSKKSVWLRAAYFEKNHGTRESLEALLQRAVAHCPKAEVLWLMGAKSKWLAGDVPAARSILALAFQANPNSEEIWLAAVKLESENNEYERARRLLAKARSSAPTARVFMKSVKLEWVLGNISAAQELCEEALRHYEDFPKLWMMKGQIEEQGELMEKAREAYNQGLKKCPHSTPLWLLLSRLEEKIGQLTRARAILEKSRLKNPKNPGLWLESVRLEYRAGLKNIANTLMAKALQECPNSGILWSEAVFLEARPQRKTKSVDALKKCEHDPHVLLAVAKLFWSERKITKAREWFHRTVKIDSDLGDAWAFFYKFELQHGTEEQQEEVRKRCENAEPRHGELWCAVSKDITNWQRKIGEILVLVAARIKNTF.

A disordered region spans residues 1–79 (MNKKKKPFLG…DEDLNDTNYD (79 aa)). Basic and acidic residues predominate over residues 39-65 (DANDPVDDRHAPPGKRTVGDQMKKNQA). The segment covering 66–78 (ADDDDEDLNDTNY) has biased composition (acidic residues). S143 carries the post-translational modification Phosphoserine. Phosphothreonine occurs at positions 180, 266, and 275. Position 279 is a phosphoserine (S279). 9 HAT repeats span residues 384–416 (TDIR…LEEP), 418–444 (DARI…ARLE), 445–476 (TYEN…LEEA), 554–586 (NALE…FEKN), 588–620 (GTRE…SKWL), 622–654 (GDVP…LESE), 689–721 (GNIS…IEEQ), 723–755 (ELME…LEEK), and 855–887 (RKIT…FELQ).

Identified in the spliceosome B complex. Identified in the spliceosome C complex. Associates with the U5 snRNP particle. Component of the U4/U6-U5 tri-snRNP complex composed of the U4, U6 and U5 snRNAs and at least PRPF3, PRPF4, PRPF6, PRPF8, PRPF31, SNRNP200, TXNL4A, SNRNP40, DDX23, CD2BP2, PPIH, SNU13, EFTUD2, SART1 and USP39, LSm proteins LSm2-8 and Sm proteins. Interacts with ARAF1. Interacts with AR and NR3C1, but not ESR1, independently of the presence of hormones. Interacts with USH1G. In terms of processing, phosphorylated by PRP4K during spliceosome assembly.

It is found in the nucleus. The protein resides in the nucleoplasm. It localises to the nucleus speckle. Its function is as follows. Involved in pre-mRNA splicing as component of the U4/U6-U5 tri-snRNP complex, one of the building blocks of the spliceosome. Enhances dihydrotestosterone-induced transactivation activity of AR, as well as dexamethasone-induced transactivation activity of NR3C1, but does not affect estrogen-induced transactivation. This chain is Pre-mRNA-processing factor 6 (Prpf6), found in Mus musculus (Mouse).